We begin with the raw amino-acid sequence, 174 residues long: Secretory-abundant heat soluble protein 2 (174 aa).

A signal peptide spans 1-19 (MHRFVLALVVFAGAAIVWA). Positions 30-60 (EWTGKPWMGKWESDPSKDENVEEFKKKLQLP) are SAHS-c1. The interval 77-105 (YKKGDEYHHKIIINDAHYKNDIVFKLGQE) is SAHS-c2. A glycan (N-linked (GlcNAc...) asparagine) is linked at Asn-111. An SAHS-c3 region spans residues 118–172 (KYEDKDGALVGSVHYTGTKEQSLDKTINNVFKLEGDHLVKTSTIEGVTMKRHYNK).

This sequence belongs to the Secretory-abundant heat soluble protein (SAHS) family.

It is found in the secreted. Functionally, secreted heat soluble protein acting as a molecular shield in water-deficient condition. Tardigrade-specific intrinsically disordered proteins (TDPs) are essential for desiccation tolerance by forming non-crystalline amorphous solids upon desiccation, and this vitrified state mirrors their protective capabilities. The sequence is that of Secretory-abundant heat soluble protein 2 from Ramazzottius varieornatus (Water bear).